The chain runs to 607 residues: UvrABC system protein C (607 aa).

The GIY-YIG domain occupies 15–93 (RKPGVYRMLD…IKELKPPYNI (79 aa)). In terms of domain architecture, UVR spans 203-238 (REVADQLSTDMEAAAAALEFEKAALLRDQLAAIQAV). Basic residues predominate over residues 542–551 (HRARRGKARK). Positions 542–561 (HRARRGKARKQSTLDEIPGI) are disordered.

It belongs to the UvrC family. In terms of assembly, interacts with UvrB in an incision complex.

The protein resides in the cytoplasm. Functionally, the UvrABC repair system catalyzes the recognition and processing of DNA lesions. UvrC both incises the 5' and 3' sides of the lesion. The N-terminal half is responsible for the 3' incision and the C-terminal half is responsible for the 5' incision. The protein is UvrABC system protein C of Alcanivorax borkumensis (strain ATCC 700651 / DSM 11573 / NCIMB 13689 / SK2).